A 361-amino-acid polypeptide reads, in one-letter code: Phospho-N-acetylmuramoyl-pentapeptide-transferase (361 aa).

Transmembrane regions (helical) follow at residues 27–47 (GALF…ISLL), 72–92 (TPTM…LLWA), 99–119 (VWVT…DDYL), 135–155 (LALE…YSPA), 169–189 (ALLN…VGAG), 200–220 (GLAI…AYLV), 240–260 (LAVV…FNAP), 264–284 (IFMG…IAVA), 289–309 (IVLA…IIQV), and 338–358 (QVVI…LATL).

It belongs to the glycosyltransferase 4 family. MraY subfamily. The cofactor is Mg(2+).

The protein resides in the cell inner membrane. The catalysed reaction is UDP-N-acetyl-alpha-D-muramoyl-L-alanyl-gamma-D-glutamyl-meso-2,6-diaminopimeloyl-D-alanyl-D-alanine + di-trans,octa-cis-undecaprenyl phosphate = di-trans,octa-cis-undecaprenyl diphospho-N-acetyl-alpha-D-muramoyl-L-alanyl-D-glutamyl-meso-2,6-diaminopimeloyl-D-alanyl-D-alanine + UMP. It participates in cell wall biogenesis; peptidoglycan biosynthesis. Its function is as follows. Catalyzes the initial step of the lipid cycle reactions in the biosynthesis of the cell wall peptidoglycan: transfers peptidoglycan precursor phospho-MurNAc-pentapeptide from UDP-MurNAc-pentapeptide onto the lipid carrier undecaprenyl phosphate, yielding undecaprenyl-pyrophosphoryl-MurNAc-pentapeptide, known as lipid I. This chain is Phospho-N-acetylmuramoyl-pentapeptide-transferase, found in Methylobacterium radiotolerans (strain ATCC 27329 / DSM 1819 / JCM 2831 / NBRC 15690 / NCIMB 10815 / 0-1).